Consider the following 368-residue polypeptide: 3-isopropylmalate dehydrogenase (368 aa).

Residue G79–E91 coordinates NAD(+). Residues R98, R108, R137, and D226 each coordinate substrate. Residues D226, D251, and D255 each coordinate Mg(2+). An NAD(+)-binding site is contributed by G291 to N303.

Belongs to the isocitrate and isopropylmalate dehydrogenases family. As to quaternary structure, homodimer. It depends on Mg(2+) as a cofactor. Mn(2+) is required as a cofactor.

It localises to the cytoplasm. It catalyses the reaction (2R,3S)-3-isopropylmalate + NAD(+) = 4-methyl-2-oxopentanoate + CO2 + NADH. It participates in amino-acid biosynthesis; L-leucine biosynthesis; L-leucine from 3-methyl-2-oxobutanoate: step 3/4. Functionally, catalyzes the oxidation of 3-carboxy-2-hydroxy-4-methylpentanoate (3-isopropylmalate) to 3-carboxy-4-methyl-2-oxopentanoate. The product decarboxylates to 4-methyl-2 oxopentanoate. The sequence is that of 3-isopropylmalate dehydrogenase (leu-1) from Neurospora crassa (strain ATCC 24698 / 74-OR23-1A / CBS 708.71 / DSM 1257 / FGSC 987).